We begin with the raw amino-acid sequence, 305 residues long: Protein ORANGE, chloroplastic (305 aa).

The transit peptide at 1–54 (MSCLGRILSVSYPPDPYGSRLSVSKLSSPGRNRRLRWRFTALDSDSSSLDSDSS) directs the protein to the chloroplast. The next 2 helical transmembrane spans lie at 144 to 164 (VYYATCFSLIAGIILFGGLLA) and 197 to 217 (IVASFSGGAVGVISALMVVEV). The interval 206–297 (VGVISALMVV…CTGMAMASEH (92 aa)) is CR-type-like. One copy of the CXXCXGXG motif repeat lies at 228–235 (CKYCLGTG). The CXXCXXXG motif repeat unit spans residues 239 to 246 (CARCSSTG). The CXXCXGXG motif repeat unit spans residues 272–279 (CSNCSGAG). A CXXCXXXG motif repeat occupies 283-290 (CPTCLCTG).

It belongs to the orange-like family. As to quaternary structure, interacts with ERF1-2. Expressed in young leaves, curds and flower buds.

The protein resides in the plastid. Its subcellular location is the chloroplast membrane. The protein localises to the nucleus. Involved in chromoplast differentiation. Is associated with a cellular process that triggers the differentiation of pro-plastids or other non-colored plastids into chromoplasts for carotenoid accumulation. Associated with carotenoid accumulation in de-etiolated cotyledons. Controls leaf petiole elongation by suppressing the expression of ERF1 genes. This chain is Protein ORANGE, chloroplastic, found in Brassica oleracea var. botrytis (Cauliflower).